The chain runs to 562 residues: Protein FAM222B (562 aa).

2 stretches are compositionally biased toward low complexity: residues 147–167 (PQAQ…LAHA) and 183–201 (ALSH…HPQQ). 2 disordered regions span residues 147 to 242 (PQAQ…PPNV) and 537 to 562 (AHRA…PGYR).

It belongs to the FAM222 family.

The polypeptide is Protein FAM222B (Fam222b) (Mus musculus (Mouse)).